The primary structure comprises 648 residues: Shugoshin (648 aa).

2 coiled-coil regions span residues 95-122 and 208-273; these read LMIK…RLSV and DDRA…KDEA. Disordered stretches follow at residues 188–239, 262–334, 367–443, 483–518, and 628–648; these read KVVG…RSSR, EADK…QEDA, VYRD…RPRR, TNRK…AAED, and HRAR…KVST. Composition is skewed to basic and acidic residues over residues 200–217 and 262–273; these read VRGE…HQEA and EADKSRSAKDEA. Over residues 306-315 the composition is skewed to polar residues; it reads ASGTLTQSNE. Basic and acidic residues-rich tracts occupy residues 424–440 and 490–509; these read IVVD…DATR and QREG…HEQD.

This sequence belongs to the shugoshin family.

The protein localises to the nucleus. The protein resides in the chromosome. It localises to the centromere. Functionally, plays a central role in chromosome cohesion during cell division by preventing premature dissociation of cohesin complex from centromeres after prophase, when most of cohesin complex dissociates from chromosomes arms. May act by protecting RAD21 and or REC8 from cleavage by ESP1/separase. This chain is Shugoshin (SGO1), found in Eremothecium gossypii (strain ATCC 10895 / CBS 109.51 / FGSC 9923 / NRRL Y-1056) (Yeast).